We begin with the raw amino-acid sequence, 110 residues long: UPF0060 membrane protein Rpal_4363 (110 aa).

The next 4 helical transmembrane spans lie at 4–24, 31–51, 59–79, and 88–108; these read LLTF…FWAW, PLWL…LTLA, AYAA…WAIE, and VIGA…PRAL.

The protein belongs to the UPF0060 family.

Its subcellular location is the cell inner membrane. This is UPF0060 membrane protein Rpal_4363 from Rhodopseudomonas palustris (strain TIE-1).